A 269-amino-acid polypeptide reads, in one-letter code: Surfeit locus protein 4 (269 aa).

A run of 5 helical transmembrane segments spans residues 65-85, 92-112, 179-199, 203-223, and 242-262; these read LASSFVFLNLLGQLTGCVLVL, YACFGLFGIIALQTIAYSILW, FFSIIQNIVGTALMILVAIGF, LAALTLVVWLFAINVYFNAFW, and TMSVIGGLLLVVALGPGGVSM. Positions 266–269 match the Di-lysine motif motif; sequence KKEW.

The protein belongs to the SURF4 family. In terms of assembly, found in a complex composed at least of SURF4, TMED2 and TMED10. May interact with LMAN1. Interacts with ZFYVE27 and with KIF5A in a ZFYVE27-dependent manner. Interacts with STING1. Interacts with SAR1B. Interacts with TMEM41B.

It is found in the endoplasmic reticulum membrane. The protein resides in the endoplasmic reticulum-Golgi intermediate compartment membrane. It localises to the golgi apparatus membrane. In terms of biological role, endoplasmic reticulum cargo receptor that mediates the export of lipoproteins by recruiting cargos into COPII vesicles to facilitate their secretion. Acts as a cargo receptor for lipoproteins bearing both APOB and APOA1, thereby regulating lipoprotein delivery and the maintenance of lipid homeostasis. Synergizes with the GTPase SAR1B to mediate transport of circulating lipoproteins. Promotes the secretion of PCSK9. Also mediates the efficient secretion of erythropoietin (EPO). May also play a role in the maintenance of the architecture of the endoplasmic reticulum-Golgi intermediate compartment and of the Golgi. The chain is Surfeit locus protein 4 from Mus musculus (Mouse).